The following is a 350-amino-acid chain: Biotin synthase (350 aa).

Residues 38-257 form the Radical SAM core domain; it reads NKVQVSTLLS…AVARIIMPMS (220 aa). Residues Cys53, Cys57, and Cys60 each coordinate [4Fe-4S] cluster. Residues Cys97, Cys128, Cys188, and Arg260 each contribute to the [2Fe-2S] cluster site.

The protein belongs to the radical SAM superfamily. Biotin synthase family. Homodimer. [4Fe-4S] cluster is required as a cofactor. [2Fe-2S] cluster serves as cofactor.

It carries out the reaction (4R,5S)-dethiobiotin + (sulfur carrier)-SH + 2 reduced [2Fe-2S]-[ferredoxin] + 2 S-adenosyl-L-methionine = (sulfur carrier)-H + biotin + 2 5'-deoxyadenosine + 2 L-methionine + 2 oxidized [2Fe-2S]-[ferredoxin]. It functions in the pathway cofactor biosynthesis; biotin biosynthesis; biotin from 7,8-diaminononanoate: step 2/2. Catalyzes the conversion of dethiobiotin (DTB) to biotin by the insertion of a sulfur atom into dethiobiotin via a radical-based mechanism. The polypeptide is Biotin synthase (Photobacterium profundum (strain SS9)).